Here is a 610-residue protein sequence, read N- to C-terminus: UvrABC system protein C (610 aa).

The GIY-YIG domain occupies 16–94; it reads SQPGVYRMYD…IKLYQPRYNV (79 aa). In terms of domain architecture, UVR spans 204–239; sequence QQVLTQLITRMEEASQQLHFEDAARIRDQIQAVRRV.

This sequence belongs to the UvrC family. In terms of assembly, interacts with UvrB in an incision complex.

It is found in the cytoplasm. Its function is as follows. The UvrABC repair system catalyzes the recognition and processing of DNA lesions. UvrC both incises the 5' and 3' sides of the lesion. The N-terminal half is responsible for the 3' incision and the C-terminal half is responsible for the 5' incision. This chain is UvrABC system protein C, found in Yersinia pseudotuberculosis serotype I (strain IP32953).